The chain runs to 430 residues: Histidine--tRNA ligase, chloroplastic (430 aa).

The protein belongs to the class-II aminoacyl-tRNA synthetase family.

The protein localises to the plastid. It is found in the chloroplast. It carries out the reaction tRNA(His) + L-histidine + ATP = L-histidyl-tRNA(His) + AMP + diphosphate + H(+). This Pyropia yezoensis (Susabi-nori) protein is Histidine--tRNA ligase, chloroplastic.